The primary structure comprises 324 residues: Beta-ketoacyl-[acyl-carrier-protein] synthase III (324 aa).

Catalysis depends on residues cysteine 113 and histidine 251. Positions 252 to 256 are ACP-binding; it reads QANKR. Residue asparagine 281 is part of the active site.

It belongs to the thiolase-like superfamily. FabH family. In terms of assembly, homodimer.

The protein resides in the cytoplasm. The catalysed reaction is malonyl-[ACP] + acetyl-CoA + H(+) = 3-oxobutanoyl-[ACP] + CO2 + CoA. Its pathway is lipid metabolism; fatty acid biosynthesis. In terms of biological role, catalyzes the condensation reaction of fatty acid synthesis by the addition to an acyl acceptor of two carbons from malonyl-ACP. Catalyzes the first condensation reaction which initiates fatty acid synthesis and may therefore play a role in governing the total rate of fatty acid production. Possesses both acetoacetyl-ACP synthase and acetyl transacylase activities. Its substrate specificity determines the biosynthesis of branched-chain and/or straight-chain of fatty acids. This Bartonella tribocorum (strain CIP 105476 / IBS 506) protein is Beta-ketoacyl-[acyl-carrier-protein] synthase III.